The sequence spans 208 residues: Photosystem I reaction center subunit II-1, chloroplastic (208 aa).

A chloroplast-targeting transit peptide spans 1 to 45 (MATQAAGIFNSAITTAATSGVKKLHFFSTTHRPKSLSFTKTAIRA). A Phosphothreonine modification is found at T48. The disordered stretch occupies residues 49–72 (DSSAAAAAAPATKEAPVGFTPPQL). Residues 50–64 (SSAAAAAAPATKEAP) show a composition bias toward low complexity. A ferredoxin and ferredoxin-oxidoreductase binding region spans residues 141 to 149 (RLRSKYKIT).

Belongs to the PsaD family. Interacts with PGRL1A and PGRL1B. Post-translationally, phosphorylated by a threonine specific thylakoid kinase in a light activated and redox-dependent manner.

It localises to the plastid. The protein localises to the chloroplast thylakoid membrane. PsaD can form complexes with ferredoxin and ferredoxin-oxidoreductase in photosystem I (PS I) reaction center. PSAD may encode the ferredoxin-docking protein. This chain is Photosystem I reaction center subunit II-1, chloroplastic (psaD1), found in Arabidopsis thaliana (Mouse-ear cress).